Reading from the N-terminus, the 153-residue chain is Carbohydrate-binding protein AWN (153 aa).

Residues 1–20 (MKLAAPSLALLLSTATLVSG) form the signal peptide. The residue at position 21 (Ala-21) is an N-acetylalanine. 2 disulfide bridges follow: Cys-29/Cys-50 and Cys-73/Cys-94. Residues 29–130 (CGGVLRDPPG…SPFHIYYYAD (102 aa)) form the CUB domain. Residues 93 to 130 (ICGGISLVFRSSSNIATIKYLRTSGQRASPFHIYYYAD) form a heparin-binding region.

It belongs to the spermadhesin family. Post-translationally, partial N-acetylation differentiates isoforms AWN-1 (not acetylated) and AWN-2 (acetylated).

Its subcellular location is the secreted. In terms of biological role, AWN proteins mediate the binding of boar spermatozoa to component(s) of the egg's zona pellucida by a carbohydrate-binding mechanism. Awn proteins are secretory components of the male accessory glands being coated to the sperm surface at the time of ejaculation. They possess as well heparin-, serine-protease-inhibitor-binding capability. This Sus scrofa (Pig) protein is Carbohydrate-binding protein AWN.